We begin with the raw amino-acid sequence, 76 residues long: ATP synthase subunit 9, mitochondrial (76 aa).

The next 2 helical transmembrane spans lie at 14-34 and 52-72; these read ISTI…AALI and ILGF…SFLL.

This sequence belongs to the ATPase C chain family. In terms of assembly, F-type ATPases have 2 components, CF(1) - the catalytic core - and CF(0) - the membrane proton channel. CF(1) has five subunits: alpha(3), beta(3), gamma(1), delta(1), epsilon(1). CF(0) has three main subunits: a, b and c.

The protein resides in the mitochondrion membrane. Its function is as follows. Mitochondrial membrane ATP synthase (F(1)F(0) ATP synthase or Complex V) produces ATP from ADP in the presence of a proton gradient across the membrane which is generated by electron transport complexes of the respiratory chain. F-type ATPases consist of two structural domains, F(1) - containing the extramembraneous catalytic core and F(0) - containing the membrane proton channel, linked together by a central stalk and a peripheral stalk. During catalysis, ATP synthesis in the catalytic domain of F(1) is coupled via a rotary mechanism of the central stalk subunits to proton translocation. Part of the complex F(0) domain. A homomeric c-ring of probably 10 subunits is part of the complex rotary element. The protein is ATP synthase subunit 9, mitochondrial (ATP9) of Vanderwaltozyma polyspora (strain ATCC 22028 / DSM 70294 / BCRC 21397 / CBS 2163 / NBRC 10782 / NRRL Y-8283 / UCD 57-17) (Kluyveromyces polysporus).